The primary structure comprises 106 residues: Ribonuclease P protein component 4 (106 aa).

Positions 62, 65, 88, and 91 each coordinate Zn(2+).

It belongs to the eukaryotic/archaeal RNase P protein component 4 family. In terms of assembly, consists of a catalytic RNA component and at least 4-5 protein subunits. Zn(2+) is required as a cofactor.

It localises to the cytoplasm. It carries out the reaction Endonucleolytic cleavage of RNA, removing 5'-extranucleotides from tRNA precursor.. Its function is as follows. Part of ribonuclease P, a protein complex that generates mature tRNA molecules by cleaving their 5'-ends. The sequence is that of Ribonuclease P protein component 4 from Methanocorpusculum labreanum (strain ATCC 43576 / DSM 4855 / Z).